The primary structure comprises 891 residues: von Willebrand factor A domain-containing protein 7 (891 aa).

A signal peptide spans 1–28 (MLPTEVPQSHPGPSALLLLQLLLPPTSA). N-linked (GlcNAc...) asparagine glycosylation occurs at Asn-55. Residues 237-272 (PKPPGKCSHGGHFDRSSSQPPRGGINKDSTSPGFSP) form a disordered region. In terms of domain architecture, VWFA spans 313 to 506 (ASSLSFVLDT…SMAALVTLPL (194 aa)).

Expressed at low level in different cell lines.

The protein localises to the secreted. This is von Willebrand factor A domain-containing protein 7 (VWA7) from Homo sapiens (Human).